We begin with the raw amino-acid sequence, 146 residues long: Early E3 16 kDa glycoprotein (146 aa).

Residues asparagine 51 and asparagine 84 are each glycosylated (N-linked (GlcNAc...) asparagine; by host).

E3 proteins seem to be dispensable for virus growth in tissue culture cells. They are potentially important for virus growth under special conditions; E3 region may help adenoviruses to evade the immune surveillance of the host. The sequence is that of Early E3 16 kDa glycoprotein from Human adenovirus B serotype 3 (HAdV-3).